Here is a 992-residue protein sequence, read N- to C-terminus: Meckelin (992 aa).

An N-terminal signal peptide occupies residues 1–35 (MVMRTRPLAAMAVRSCFSALTGTVYLLLVLCEVSW). Topologically, residues 36-516 (AQIFSFPFQR…SVKYEMNQGD (481 aa)) are extracellular. The tract at residues 37–280 (QIFSFPFQRP…FHYVFEGAAG (244 aa)) is cysteine-rich. 12 disulfide bridges follow: cysteine 49–cysteine 62, cysteine 65–cysteine 78, cysteine 80–cysteine 97, cysteine 100–cysteine 114, cysteine 117–cysteine 127, cysteine 129–cysteine 150, cysteine 153–cysteine 170, cysteine 173–cysteine 184, cysteine 186–cysteine 197, cysteine 237–cysteine 246, cysteine 253–cysteine 268, and cysteine 354–cysteine 375. N-linked (GlcNAc...) asparagine glycosylation is present at asparagine 242. The helical transmembrane segment at 517–545 (AFVQTDIALGVLGGLAVLSSLLKTAGWKR) threads the bilayer. Topologically, residues 546–555 (RIGSPMIDLQ) are cytoplasmic. Residues 556–587 (TVMKFLLYYAGDLANVFFIITVGTGLYWLIFF) form a helical membrane-spanning segment. Over 588–600 (KAQKSVSVLLPMP) the chain is Extracellular. The helical transmembrane segment at 601–628 (VQEERFVTYVGCAFAMKALQFLHKLISQ) threads the bilayer. The Cytoplasmic segment spans residues 629–667 (ITIDIFFIDWERPKGKVLKAVEGEGGVRSATVPVSIWRT). Positions 668–676 (YFVANEWNE) form an intramembrane region, helical. The discontinuously helical transmembrane segment at 668–698 (YFVANEWNEIQTVRKINPLFQVLTTLFFLEV) threads the bilayer. The stretch at 677 to 685 (IQTVRKINP) is an intramembrane region. The helical intramembrane region spans 686–698 (LFQVLTTLFFLEV). The Extracellular segment spans residues 699–728 (VGFKNLALMDPSSSLSRSLSDYAAPYSRIL). The helical intramembrane region spans 729–754 (RYAVATTIWLVIGIVQVVFFAAFYER). A discontinuously helical membrane pass occupies residues 729–768 (RYAVATTIWLVIGIVQVVFFAAFYERFIEDKIRQFVDLCS). Residues 755 to 759 (FIEDK) lie within the membrane without spanning it. The segment at residues 760-768 (IRQFVDLCS) is an intramembrane region (helical). Topologically, residues 769–923 (MSNVSVFLLS…SIFYNDESHS (155 aa)) are cytoplasmic. Positions 924 to 926 (FSS) form an intramembrane region, helical. Residues 924–949 (FSSVLYYGNEATLLIFDLLFFCVVDL) traverse the membrane as a discontinuously helical segment. The stretch at 927–933 (VLYYGNE) is an intramembrane region. Positions 934 to 949 (ATLLIFDLLFFCVVDL) form an intramembrane region, helical. Topologically, residues 950 to 954 (ACQNF) are extracellular. Residues 955–982 (VLASFLTYLQQEIFRFIRNTVGQKNLAT) form a helical membrane-spanning segment. Over 983–992 (KTLVDERFLI) the chain is Cytoplasmic.

As to quaternary structure, homodimer. Part of the tectonic-like complex (also named B9 complex). Interacts with DNAJB9, DNAJC10 and mutated SFTPC. Interacts with SYNE2 during the early establishment of cell polarity. Interacts (via C-terminus) with FLNA. Interacts with TMEM218. Interacts with WNT5A. Interacts with ROR2.

The protein resides in the cell membrane. Its subcellular location is the endoplasmic reticulum membrane. The protein localises to the cytoplasm. It is found in the cytoskeleton. It localises to the cilium basal body. Part of the tectonic-like complex which is required for tissue-specific ciliogenesis and may regulate ciliary membrane composition. Involved in centrosome migration to the apical cell surface during early ciliogenesis. Required for ciliary structure and function, including a role in regulating length and appropriate number through modulating centrosome duplication. Is a key regulator of stereociliary bundle orientation. Required for epithelial cell branching morphology. Essential for endoplasmic reticulum-associated degradation (ERAD) of surfactant protein C (sftpc). Involved in the negative regulation of canonical Wnt signaling, and activation of the non-canonical cascade stimulated by WNT5A. In non-canonical Wnt signaling, it may act as ROR2 coreceptor. The protein is Meckelin (Tmem67) of Rattus norvegicus (Rat).